The following is a 598-amino-acid chain: Elongation factor 4 (598 aa).

In terms of domain architecture, tr-type G spans 4-186; the sequence is KHIRNFSIIA…VIVRQIPPPE (183 aa). Residues 16-21 and 133-136 each bind GTP; these read DHGKST and NKID.

This sequence belongs to the TRAFAC class translation factor GTPase superfamily. Classic translation factor GTPase family. LepA subfamily.

Its subcellular location is the cell inner membrane. It catalyses the reaction GTP + H2O = GDP + phosphate + H(+). Its function is as follows. Required for accurate and efficient protein synthesis under certain stress conditions. May act as a fidelity factor of the translation reaction, by catalyzing a one-codon backward translocation of tRNAs on improperly translocated ribosomes. Back-translocation proceeds from a post-translocation (POST) complex to a pre-translocation (PRE) complex, thus giving elongation factor G a second chance to translocate the tRNAs correctly. Binds to ribosomes in a GTP-dependent manner. In Pseudoalteromonas atlantica (strain T6c / ATCC BAA-1087), this protein is Elongation factor 4.